A 556-amino-acid polypeptide reads, in one-letter code: Inositol 1,4,5-trisphosphate receptor-interacting protein (556 aa).

The signal sequence occupies residues 1–15 (MALGLFRVCLVVVTA). Residues 16-88 (IINHPLLFPR…EGQQQNESRT (73 aa)) lie on the Extracellular side of the membrane. Residues Asn-27 and Asn-84 are each glycosylated (N-linked (GlcNAc...) asparagine). Residues 32 to 87 (ENEEEIIRQMQAHQEKLQLEQLRLEEEMARLAADKEAEKEALERVAEEGQQQNESR) are a coiled coil. Residues 89 to 107 (AWDLWSTLCMILFLVIEVW) form a helical membrane-spanning segment. The Cytoplasmic segment spans residues 108–556 (RQDHQDAPSP…ASLPPKTVIL (449 aa)).

It belongs to the ITPRIP family. As to quaternary structure, interacts with ITPR.

It localises to the cell membrane. Its subcellular location is the nucleus outer membrane. In terms of biological role, enhances Ca(2+)-mediated inhibition of inositol 1,4,5-triphosphate receptor (ITPR) Ca(2+) release. The sequence is that of Inositol 1,4,5-trisphosphate receptor-interacting protein (ITPRIP) from Bos taurus (Bovine).